Here is a 344-residue protein sequence, read N- to C-terminus: F17a-G fimbrial adhesin (344 aa).

The signal sequence occupies residues 1–22 (MTNFYKVFLAVFILVCCNISQA). The receptor-binding lectin domain stretch occupies residues 23 to 199 (AVSFIGSTEN…SLNPFTLNDT (177 aa)). Residues 65–66 (AN), 110–111 (DT), and 139–142 (STQG) each bind a carbohydrate. A disulfide bridge connects residues Cys75 and Cys132. The tract at residues 200 to 344 (VTSCRLLTPS…GISTFTFSYQ (145 aa)) is fimbrillin-binding domain. Residues 288–308 (LKFGPDSPVKGNENQWQLSTG) are disordered. Over residues 299–308 (NENQWQLSTG) the composition is skewed to polar residues.

Belongs to the fimbrial protein family.

The protein resides in the fimbrium. In terms of biological role, essential fimbrial adhesion factor that mediates binding to N-acetylglucosamine-containing receptors in the host intestinal microvilli, leading to colonization of the intestinal tissue, and diarrhea or septicemia. Also confers adhesiveness to laminin and basement membranes. This Escherichia coli protein is F17a-G fimbrial adhesin (f17aG).